Reading from the N-terminus, the 174-residue chain is Protein C (174 aa).

This sequence belongs to the morbillivirus protein C family.

In Canine distemper virus (strain Onderstepoort) (CDV), this protein is Protein C (P/V/C).